The following is a 355-amino-acid chain: Guanine nucleotide-binding protein G(o) subunit alpha (355 aa).

The segment covering 1–17 has biased composition (low complexity); sequence MGCASSAEERAAPSAQQ. Positions 1–24 are disordered; the sequence is MGCASSAEERAAPSAQQADREKLK. Gly-2 carries N-myristoyl glycine lipidation. Cys-3 is lipidated: S-palmitoyl cysteine. Positions 32–355 constitute a G-alpha domain; it reads KDIKLLLLGA…ANNLRGCGLY (324 aa). Residues 35-48 are G1 motif; the sequence is KLLLLGAGESGKST. GTP-binding positions include 40 to 47, 176 to 182, 201 to 205, 201 to 206, 271 to 274, and Ala-327; these read GAGESGKS, LRTRVKT, DVGRG, DVGRGQ, and NKKD. Mg(2+)-binding residues include Ser-47 and Thr-182. Positions 174 to 182 are G2 motif; the sequence is DILRTRVKT. The G3 motif stretch occupies residues 197 to 206; it reads FKLFDVGRGQ. Positions 267 to 274 are G4 motif; sequence ILFLNKKD. A G5 motif region spans residues 326–330; sequence TATDT.

Belongs to the G-alpha family. G(i/o/t/z) subfamily. G proteins are composed of 3 units; alpha, beta and gamma. The alpha chain contains the guanine nucleotide binding site.

In terms of biological role, guanine nucleotide-binding proteins (G proteins) are involved as modulators or transducers in various transmembrane signaling systems. The G(o) protein function is not clear. The polypeptide is Guanine nucleotide-binding protein G(o) subunit alpha (Manduca sexta (Tobacco hawkmoth)).